Consider the following 138-residue polypeptide: MINNIVLVGRMTKDAELRYTPSNQAVATFSLAVNRNFKNQSGEREADFINCVIWRQQAENLANWAKKGALVGITGRIQTRNYENQQGQRIYVTEVVAENFQLLESRNSQQQTNQSGNSSNSYFGNANKMDISDDDLPF.

Residues 1–104 form the SSB domain; it reads MINNIVLVGR…VVAENFQLLE (104 aa). Low complexity predominate over residues 105–121; sequence SRNSQQQTNQSGNSSNS. The disordered stretch occupies residues 105–138; sequence SRNSQQQTNQSGNSSNSYFGNANKMDISDDDLPF. The Important for interaction with partner proteins motif lies at 133 to 138; the sequence is DDDLPF.

As to quaternary structure, homotetramer.

Its function is as follows. Plays an important role in DNA replication, recombination and repair. Binds to ssDNA and to an array of partner proteins to recruit them to their sites of action during DNA metabolism. The sequence is that of Single-stranded DNA-binding protein 3 (ssb3) from Streptococcus agalactiae serotype V (strain ATCC BAA-611 / 2603 V/R).